Reading from the N-terminus, the 421-residue chain is E3 ubiquitin-protein ligase RMD5 (421 aa).

The CTLH domain maps to 176 to 236; the sequence is EFIEMGQIVH…QIVKHGNPVE (61 aa). An RING-Gid-type zinc finger spans residues 361–404; it reads CPVLKEETTTENPPYSLACHHIISKKALDRLSKNGTITFKCPYC.

This sequence belongs to the RMD5/GID2 family. In terms of assembly, identified in the GID/CTLH complex. In the absence of stress, the complex exists as an inactive anticipatory complex (GID(Ant)), composed of VID30/GID1, the E3 ubiquitin-ligase RMD5/GID2, VID28/GID5, GID8, and the RING-like subunit FYV10/GID9, awaiting a substrate receptor to form the active E3 ligase complex. When cells are shifted to glucose-containing medium, the substrate receptor VID24/GID4 is induced and becomes part of the complex, named GID(SR4). Additionally, GID7 transforms the GID(SR4) E3 ligase core into a higher-order supramolecular assembly (Chelator-GID(SR4)) specifically tailored for FBP1 ubiquitination. Under osmotic or heat stress, the substrate receptor GID10 is induced and becomes part of the complex, named GID(SR10). Within the GID complex, interacts directly with GID8, FYV10/GID9 and VID28/GID5.

The protein resides in the cytoplasm. The enzyme catalyses S-ubiquitinyl-[E2 ubiquitin-conjugating enzyme]-L-cysteine + [acceptor protein]-L-lysine = [E2 ubiquitin-conjugating enzyme]-L-cysteine + N(6)-ubiquitinyl-[acceptor protein]-L-lysine.. The protein operates within protein modification; protein ubiquitination. In terms of biological role, E3 ubiquitin-protein ligase component of the GID E3 ligase complex recruiting N termini and catalyzing ubiquitination of proteins targeted for degradation. GID E3 is regulated through assembly with interchangeable N-degron-binding substrate receptors induced by distinct environmental perturbations. Required for the adaptation to the presence of glucose in the growth medium; mediates in association with the substrate receptor VID24/GID4 the degradation of enzymes involved in gluconeogenesis when cells are shifted to glucose-containing medium. Required for proteasome-dependent catabolite degradation of fructose-1,6-bisphosphatase (FBP1), malate dehydrogenase (MDH2), and other gluconeogenic enzymes. The sequence is that of E3 ubiquitin-protein ligase RMD5 from Saccharomyces cerevisiae (strain ATCC 204508 / S288c) (Baker's yeast).